Consider the following 266-residue polypeptide: Putative hydro-lyase VF_1377 (266 aa).

The protein belongs to the D-glutamate cyclase family.

This chain is Putative hydro-lyase VF_1377, found in Aliivibrio fischeri (strain ATCC 700601 / ES114) (Vibrio fischeri).